Reading from the N-terminus, the 1158-residue chain is Type IV pilus biogenesis factor PilY1 (1158 aa).

Positions 1–29 (MIHQITRAGKSLLAAGCTLSILFASDSYA) are cleaved as a signal peptide. Residues Asp841, Asn843, Asp845, Ile847, and Asp849 each coordinate Ca(2+).

Belongs to the PilY1 family.

It is found in the fimbrium. The protein localises to the membrane. The protein resides in the cytoplasm. Its subcellular location is the cytosol. In terms of biological role, involved in pilus assembly, twitching motility and adhesion to host cells. Primes type IV pili (T4P) assembly and is required for inclusion of minor pilins PilV, PilW and PilX to the surface pili. Stabilizes assembled pilus fibers likely by antagonizing retraction mediated by PilT. Calcium-binding and calcium release by PilY1 seem to be essential for twitching motility and for regulation of pilus retraction dynamics of PilT. Regulates surface-activated virulence possibly by acting as a surface-attachment mechanosensor. In Pseudomonas aeruginosa (strain UCBPP-PA14), this protein is Type IV pilus biogenesis factor PilY1.